The chain runs to 91 residues: Acylphosphatase (91 aa).

Residues 4 to 91 (RAIVTIKGLV…GEFDDFDVRY (88 aa)) form the Acylphosphatase-like domain. Residues R19 and N37 contribute to the active site.

It belongs to the acylphosphatase family.

The enzyme catalyses an acyl phosphate + H2O = a carboxylate + phosphate + H(+). This is Acylphosphatase (acyP) from Geobacter sulfurreducens (strain ATCC 51573 / DSM 12127 / PCA).